The primary structure comprises 621 residues: Intermediate filament protein ifc-2 (621 aa).

A head region spans residues 20 to 55 (SGAYTSGFGGLVSGMSSAGAICTTQIRDAREREKRE). One can recognise an IF rod domain in the interval 52–400 (EKREIGLLND…VLLNGANVTT (349 aa)). Residues 56–87 (IGLLNDRLADYIEKVRFLEAQNQCLSHDIDIL) are coil 1A. The segment at 88 to 100 (RRGFSGGGHVSGL) is linker 1. The tract at residues 101–238 (YDTEIAQAKR…TENSTRIEQE (138 aa)) is coil 1B. The segment at 239–256 (LVFIRRDTTAENRDYFRH) is linker 12. The segment at 257 to 400 (ELQAAIRDIR…VLLNGANVTT (144 aa)) is coil 2. Residues 401 to 549 (YVSNTHPSGV…RVDVGGFRVE (149 aa)) are tail. The region spanning 508-621 (SGRSFHSWYL…EERAWFVYLN (114 aa)) is the LTD domain.

The protein belongs to the intermediate filament family.

It is found in the cytoplasm. Cytoplasmic intermediate filaments provide mechanical strength to cells. The polypeptide is Intermediate filament protein ifc-2 (Caenorhabditis briggsae).